Reading from the N-terminus, the 713-residue chain is Phospholipase A1 PLIP2, chloroplastic (713 aa).

The N-terminal 32 residues, Met1–Arg32, are a transit peptide targeting the chloroplast. Disordered regions lie at residues Trp118–Val140 and Ala232–Lys261. Residues Glu122–Val140 show a composition bias toward acidic residues. Residues Gly426–Gly430 carry the GXSXG motif. Ser428 functions as the Acyl-ester intermediate in the catalytic mechanism. Residues Asp489 and His608 each act as charge relay system in the active site.

Belongs to the AB hydrolase superfamily. Lipase family.

It is found in the plastid. It localises to the chloroplast membrane. Its subcellular location is the chloroplast stroma. The catalysed reaction is a 1,2-diacyl-3-O-(beta-D-galactosyl)-sn-glycerol + 2 H2O = 3-beta-D-galactosyl-sn-glycerol + 2 a fatty acid + 2 H(+). The enzyme catalyses a 1,2-diacyl-sn-glycero-3-phosphocholine + H2O = a 2-acyl-sn-glycero-3-phosphocholine + a fatty acid + H(+). It carries out the reaction 1-hexadecanoyl-2-(9Z-octadecenoyl)-sn-glycero-3-phosphocholine + H2O = 2-(9Z-octadecenoyl)-sn-glycero-3-phosphocholine + hexadecanoate + H(+). It catalyses the reaction 1,2-di-(9Z-octadecenoyl)-sn-glycero-3-phosphocholine + H2O = 2-(9Z-octadecenoyl)-sn-glycero-3-phosphocholine + (9Z)-octadecenoate + H(+). The catalysed reaction is 1-octadecanoyl-2-(9Z-octadecenoyl)-sn-glycero-3-phosphocholine + H2O = 2-(9Z-octadecenoyl)-sn-glycero-3-phosphocholine + octadecanoate + H(+). The enzyme catalyses 1-octadecanoyl-2-(9Z,12Z)-octadecadienoyl-sn-glycero-3-phosphocholine + H2O = 2-(9Z,12Z-octadecadienoyl)-sn-glycero-3-phosphocholine + octadecanoate + H(+). It carries out the reaction 1,2-di-(9Z,12Z-octadecadienoyl)-sn-glycero-3-phosphocholine + H2O = 2-(9Z,12Z-octadecadienoyl)-sn-glycero-3-phosphocholine + (9Z,12Z)-octadecadienoate + H(+). It catalyses the reaction 1-(9Z-octadecenoyl)-2-hexadecanoyl-sn-glycero-3-phosphocholine + H2O = 2-hexadecanoyl-sn-glycero-3-phosphocholine + (9Z)-octadecenoate + H(+). Functionally, sn-1-specific phospholipase A1 that catalyzes the initial step of oxylipins and jasmonate (JA) biosynthesis. Hydrolyzes polyunsaturated acyl groups preferentially from chloroplastic monogalactosyldiacylglycerol (MGDG). May function downstream of abscisic acid (ABA) and provide a link between ABA-mediated abiotic stress responses and oxylipin and JA signalings. In vitro, possesses broad substrate specificity. Can hydrolyze the galactolipids monogalactosyldiacylglycerol (MGDG) and digalactosyldiacylglycerol (DGDG), the sulfolipid sulfoquinovosyldiacylglycerol (SQDG), and the phoshpolipids phosphatidylcholine (PC), and phosphatidylglycerol (PG). The chain is Phospholipase A1 PLIP2, chloroplastic from Arabidopsis thaliana (Mouse-ear cress).